The following is a 135-amino-acid chain: Large ribosomal subunit protein bL17 (135 aa).

Belongs to the bacterial ribosomal protein bL17 family. As to quaternary structure, part of the 50S ribosomal subunit. Contacts protein L32.

The protein is Large ribosomal subunit protein bL17 of Listeria innocua serovar 6a (strain ATCC BAA-680 / CLIP 11262).